The primary structure comprises 231 residues: ATP phosphoribosyltransferase (231 aa).

Belongs to the ATP phosphoribosyltransferase family. Short subfamily. In terms of assembly, heteromultimer composed of HisG and HisZ subunits.

It localises to the cytoplasm. The catalysed reaction is 1-(5-phospho-beta-D-ribosyl)-ATP + diphosphate = 5-phospho-alpha-D-ribose 1-diphosphate + ATP. It participates in amino-acid biosynthesis; L-histidine biosynthesis; L-histidine from 5-phospho-alpha-D-ribose 1-diphosphate: step 1/9. In terms of biological role, catalyzes the condensation of ATP and 5-phosphoribose 1-diphosphate to form N'-(5'-phosphoribosyl)-ATP (PR-ATP). Has a crucial role in the pathway because the rate of histidine biosynthesis seems to be controlled primarily by regulation of HisG enzymatic activity. This Psychrobacter arcticus (strain DSM 17307 / VKM B-2377 / 273-4) protein is ATP phosphoribosyltransferase.